The following is a 39-amino-acid chain: Contryphan-Cal3 (39 aa).

Residues 1 to 20 (MTRTAVLLLTLLFLVAMAAS) form the signal peptide. A disulfide bridge connects residues Cys29 and Cys35.

In terms of tissue distribution, expressed by the venom duct.

It localises to the secreted. In terms of biological role, probable neurotoxin. This Californiconus californicus (California cone) protein is Contryphan-Cal3.